The primary structure comprises 148 residues: Ubiquitin-conjugating enzyme E2 5B (148 aa).

The UBC core domain occupies 1–147; sequence MASKRILKEL…ARSWTQKYAM (147 aa). Cys-85 functions as the Glycyl thioester intermediate in the catalytic mechanism.

Belongs to the ubiquitin-conjugating enzyme family.

The catalysed reaction is S-ubiquitinyl-[E1 ubiquitin-activating enzyme]-L-cysteine + [E2 ubiquitin-conjugating enzyme]-L-cysteine = [E1 ubiquitin-activating enzyme]-L-cysteine + S-ubiquitinyl-[E2 ubiquitin-conjugating enzyme]-L-cysteine.. It participates in protein modification; protein ubiquitination. E2 conjugating enzyme that associates with the E3 ubiquitin-protein ligase EL5 to mediate ubiquitination of target proteins. The chain is Ubiquitin-conjugating enzyme E2 5B (UBC5B) from Oryza sativa subsp. japonica (Rice).